The primary structure comprises 399 residues: MSFSRLLTPRILLDTTAVFPPSSSVVAPSLSRQLRCTRTGGSPPAPPHRLVARRAMSNGAAEPAIYGGGGGAQQAASSAAARRVTLATLRGKHRRGEPISMVTAYDYPSGVHVDAAGFDICLVGDSAAMVAHGHDNTLPISLDLMIEHCRAVARGAARTFLVGDLPFGSYEASTAQAVGSAVRVMKEGGVNSIKLEGSAPSRISAARAIVDAGIAVMGHIGLTPQSVSALGGFRPQGKTVESAVKVVEAALALQEAGCFAVVLECVPAPVAAAATSALTIPTIGIGAGPFCSGQVLVYHDLLGTFQTSHAKVSPKFCKQYGNIGDVINRALSKYKQEVETQSFPGPSHTPYKLAATDVDAFLNALKMKGLNVAADAAADAVEYTDEKEINGTPQLKVYA.

The transit peptide at 1 to 90 (MSFSRLLTPR…ARRVTLATLR (90 aa)) directs the protein to the mitochondrion. The Mg(2+) site is built by Asp-125 and Asp-164. 3-methyl-2-oxobutanoate-binding positions include 125–126 (DS), Asp-164, and Lys-194. A Mg(2+)-binding site is contributed by Glu-196. Residue Glu-264 is the Proton acceptor of the active site.

This sequence belongs to the PanB family. Mg(2+) serves as cofactor.

The protein resides in the mitochondrion. It carries out the reaction 3-methyl-2-oxobutanoate + (6R)-5,10-methylene-5,6,7,8-tetrahydrofolate + H2O = 2-dehydropantoate + (6S)-5,6,7,8-tetrahydrofolate. Its pathway is cofactor biosynthesis; (R)-pantothenate biosynthesis; (R)-pantoate from 3-methyl-2-oxobutanoate: step 1/2. Functionally, catalyzes the reversible reaction in which hydroxymethyl group from 5,10-methylenetetrahydrofolate is transferred onto alpha-ketoisovalerate to form ketopantoate. The sequence is that of 3-methyl-2-oxobutanoate hydroxymethyltransferase 2, mitochondrial (KPHMT2) from Oryza sativa subsp. japonica (Rice).